Consider the following 236-residue polypeptide: 2,3,4,5-tetrahydropyridine-2,6-dicarboxylate N-acetyltransferase (236 aa).

It belongs to the transferase hexapeptide repeat family. DapH subfamily.

It catalyses the reaction (S)-2,3,4,5-tetrahydrodipicolinate + acetyl-CoA + H2O = L-2-acetamido-6-oxoheptanedioate + CoA. It functions in the pathway amino-acid biosynthesis; L-lysine biosynthesis via DAP pathway; LL-2,6-diaminopimelate from (S)-tetrahydrodipicolinate (acetylase route): step 1/3. Catalyzes the transfer of an acetyl group from acetyl-CoA to tetrahydrodipicolinate. The chain is 2,3,4,5-tetrahydropyridine-2,6-dicarboxylate N-acetyltransferase from Clostridium beijerinckii (strain ATCC 51743 / NCIMB 8052) (Clostridium acetobutylicum).